The chain runs to 499 residues: Isoflavone 2'-hydroxylase (499 aa).

A heme-binding site is contributed by cysteine 436.

It belongs to the cytochrome P450 family. The cofactor is heme.

The protein resides in the membrane. It carries out the reaction a 2'-unsubstituted isoflavone + reduced [NADPH--hemoprotein reductase] + O2 = a 2'-hydroxyisoflavone + oxidized [NADPH--hemoprotein reductase] + H2O + H(+). Functionally, catalyzes the hydroxylation of isoflavones, daidzein and formononetin, to yield 2'-hydroxyisoflavones, 2'-hydroxydaidzein, and 2'-hydroxyformononetin, respectively. This is Isoflavone 2'-hydroxylase (CYP81E1) from Glycyrrhiza echinata (Licorice).